The primary structure comprises 329 residues: Replication factor C small subunit 1 (329 aa).

44–51 (GPPGTGKT) provides a ligand contact to ATP.

This sequence belongs to the activator 1 small subunits family. RfcS subfamily. As to quaternary structure, heteromultimer composed of small subunits (RfcS) and large subunits (RfcL).

Part of the RFC clamp loader complex which loads the PCNA sliding clamp onto DNA. The protein is Replication factor C small subunit 1 of Pyrobaculum arsenaticum (strain DSM 13514 / JCM 11321 / PZ6).